Consider the following 89-residue polypeptide: Rho beta-crystallin (89 aa).

His31 contributes to the substrate binding site.

It belongs to the aldo/keto reductase family. Monomer.

This is Rho beta-crystallin from Lepidodactylus lugubris (Mourning gecko).